Consider the following 274-residue polypeptide: Glutamate racemase (274 aa).

Residues 9-10 (DS) and 41-42 (YG) contribute to the substrate site. Cysteine 73 (proton donor/acceptor) is an active-site residue. Position 74 to 75 (74 to 75 (NT)) interacts with substrate. Cysteine 183 functions as the Proton donor/acceptor in the catalytic mechanism. A substrate-binding site is contributed by 184 to 185 (TH).

It belongs to the aspartate/glutamate racemases family.

It catalyses the reaction L-glutamate = D-glutamate. It functions in the pathway cell wall biogenesis; peptidoglycan biosynthesis. Its function is as follows. Provides the (R)-glutamate required for cell wall biosynthesis. The chain is Glutamate racemase from Shewanella baltica (strain OS185).